The following is a 276-amino-acid chain: Foldase protein PrsA (276 aa).

Residues 1–18 (MRKWMIVAAVAAVFGLSA) form the signal peptide. The N-palmitoyl cysteine moiety is linked to residue Cys19. Cys19 carries the S-diacylglycerol cysteine lipid modification. Residues 133 to 223 (KPKIRASHIL…YGYHIIKVTD (91 aa)) enclose the PpiC domain.

It belongs to the PrsA family.

The protein resides in the cell membrane. The enzyme catalyses [protein]-peptidylproline (omega=180) = [protein]-peptidylproline (omega=0). In terms of biological role, plays a major role in protein secretion by helping the post-translocational extracellular folding of several secreted proteins. This Geobacillus sp. (strain WCH70) protein is Foldase protein PrsA.